A 279-amino-acid chain; its full sequence is Putative pyruvate, phosphate dikinase regulatory protein (279 aa).

Glycine 153–threonine 160 contributes to the ADP binding site.

This sequence belongs to the pyruvate, phosphate/water dikinase regulatory protein family. PDRP subfamily.

The catalysed reaction is N(tele)-phospho-L-histidyl/L-threonyl-[pyruvate, phosphate dikinase] + ADP = N(tele)-phospho-L-histidyl/O-phospho-L-threonyl-[pyruvate, phosphate dikinase] + AMP + H(+). It carries out the reaction N(tele)-phospho-L-histidyl/O-phospho-L-threonyl-[pyruvate, phosphate dikinase] + phosphate + H(+) = N(tele)-phospho-L-histidyl/L-threonyl-[pyruvate, phosphate dikinase] + diphosphate. Its function is as follows. Bifunctional serine/threonine kinase and phosphorylase involved in the regulation of the pyruvate, phosphate dikinase (PPDK) by catalyzing its phosphorylation/dephosphorylation. This Brucella abortus (strain 2308) protein is Putative pyruvate, phosphate dikinase regulatory protein.